The chain runs to 148 residues: Large ribosomal subunit protein uL15 (148 aa).

The segment covering 1–10 (MQLHNLEYKK) has biased composition (basic and acidic residues). Positions 1 to 42 (MQLHNLEYKKGSRNHKEKRVGRGHGSGLGKTSGRGQDGQKAR) are disordered. The span at 11–22 (GSRNHKEKRVGR) shows a compositional bias: basic residues. A compositionally biased stretch (gly residues) spans 23 to 36 (GHGSGLGKTSGRGQ).

It belongs to the universal ribosomal protein uL15 family. In terms of assembly, part of the 50S ribosomal subunit.

In terms of biological role, binds to the 23S rRNA. The protein is Large ribosomal subunit protein uL15 of Ureaplasma parvum serovar 3 (strain ATCC 27815 / 27 / NCTC 11736).